Here is a 124-residue protein sequence, read N- to C-terminus: Small ribosomal subunit protein uS12 (124 aa).

Residues 1–27 (MPTINQLIRKPRKSQTEKTASPALQNC) form a disordered region. The segment covering 17–27 (EKTASPALQNC) has biased composition (polar residues). D89 bears the 3-methylthioaspartic acid mark.

Belongs to the universal ribosomal protein uS12 family. In terms of assembly, part of the 30S ribosomal subunit. Contacts proteins S8 and S17. May interact with IF1 in the 30S initiation complex.

In terms of biological role, with S4 and S5 plays an important role in translational accuracy. Interacts with and stabilizes bases of the 16S rRNA that are involved in tRNA selection in the A site and with the mRNA backbone. Located at the interface of the 30S and 50S subunits, it traverses the body of the 30S subunit contacting proteins on the other side and probably holding the rRNA structure together. The combined cluster of proteins S8, S12 and S17 appears to hold together the shoulder and platform of the 30S subunit. The chain is Small ribosomal subunit protein uS12 from Borreliella afzelii (strain PKo) (Borrelia afzelii).